The primary structure comprises 690 residues: Heterogeneous nuclear ribonucleoprotein M (690 aa).

The segment covering 1–13 (MAAGVEAAAEVAA) has biased composition (low complexity). The disordered stretch occupies residues 1-63 (MAAGVEAAAE…KRGGNRFEPY (63 aa)). Alanine 2 is modified (N-acetylalanine). Lysine 17 is covalently cross-linked (Glycyl lysine isopeptide (Lys-Gly) (interchain with G-Cter in SUMO2)). Serine 29 carries the phosphoserine modification. Residues lysine 37, lysine 68, and lysine 82 each participate in a glycyl lysine isopeptide (Lys-Gly) (interchain with G-Cter in SUMO2) cross-link. The segment covering 37 to 49 (KGEERPTQNEKRK) has biased composition (basic and acidic residues). RRM domains follow at residues 70 to 148 (YRAF…EDPD) and 164 to 241 (STVF…MDER). Position 85 is a phosphoserine (serine 85). Residues lysine 87 and lysine 126 each participate in a glycyl lysine isopeptide (Lys-Gly) (interchain with G-Cter in SUMO2) cross-link. An N6-acetyllysine; alternate modification is found at lysine 133. Lysine 133 is covalently cross-linked (Glycyl lysine isopeptide (Lys-Gly) (interchain with G-Cter in SUMO2); alternate). Residues lysine 142 and lysine 144 each participate in a glycyl lysine isopeptide (Lys-Gly) (interchain with G-Cter in SUMO2) cross-link. Serine 164 carries the phosphoserine modification. Lysine 181 participates in a covalent cross-link: Glycyl lysine isopeptide (Lys-Gly) (interchain with G-Cter in SUMO2). Position 237 is an N6-acetyllysine; alternate (lysine 237). Lysine 237 participates in a covalent cross-link: Glycyl lysine isopeptide (Lys-Gly) (interchain with G-Cter in SUMO2); alternate. Residues lysine 245 and lysine 305 each participate in a glycyl lysine isopeptide (Lys-Gly) (interchain with G-Cter in SUMO2) cross-link. Phosphoserine is present on residues serine 325 and serine 337. Glycyl lysine isopeptide (Lys-Gly) (interchain with G-Cter in SUMO2) cross-links involve residues lysine 341 and lysine 348. Serine 357 bears the Phosphoserine mark. 4 consecutive repeat copies span residues 360–365 (GIERMG), 367–372 (GIDRIS), 375–380 (GMERMG), and 386–391 (GMDRVG). The 27 X 6 AA repeats of [GEVSTPAN]-[ILMV]-[DE]-[RH]-[MLVI]-[GAV] stretch occupies residues 360 to 568 (GIERMGPGID…ALGAGIERMG (209 aa)). A Phosphoserine modification is found at serine 392. Repeat copies occupy residues 393 to 398 (EIERMG), 400 to 405 (VMDRMG), and 406 to 411 (SVERMG). At serine 412 the chain carries Phosphoserine. Tandem repeats lie at residues 413–418 (GIERMG), 421–426 (GLDHMA), 428–433 (SIERMG), and 435–440 (TMERIG). The residue at position 428 (serine 428) is a Phosphoserine. Serine 441 is modified (phosphoserine). 16 tandem repeats follow at residues 442–447 (GVERMG), 453–458 (GLERMA), 460–465 (PIDRVG), 467–472 (TIERMG), 474–479 (GVERMG), 481–486 (AIERMG), 488–493 (SMDRMV), 500–505 (GLERMG), 507–512 (VMDRMA), 514–519 (GLERMG), 522–527 (NLERMG), 528–532 (LERMG), 535–540 (SLERMG), 541–545 (LERMG), 548–553 (SLERMG), and 563–568 (GIERMG). Arginine 456 is subject to Omega-N-methylarginine. The residue at position 488 (serine 488) is a Phosphoserine. Serine 535 carries the phosphoserine modification. Serine 548 is subject to Phosphoserine. Phosphoserine occurs at positions 578, 593, and 597. A Glycyl lysine isopeptide (Lys-Gly) (interchain with G-Cter in SUMO2) cross-link involves residue lysine 611. In terms of domain architecture, RRM 3 spans 613–689 (CQIFVRNLPF…REIDVRIDRN (77 aa)). The residue at position 625 (threonine 625) is a Phosphothreonine. A Glycyl lysine isopeptide (Lys-Gly) (interchain with G-Cter in SUMO2) cross-link involves residue lysine 627. N6-acetyllysine is present on lysine 632. Glycyl lysine isopeptide (Lys-Gly) (interchain with G-Cter in SUMO2) cross-links involve residues lysine 645 and lysine 652. Lysine 658 is modified (N6-acetyllysine; alternate). A Glycyl lysine isopeptide (Lys-Gly) (interchain with G-Cter in SUMO2); alternate cross-link involves residue lysine 658. Residue lysine 658 forms a Glycyl lysine isopeptide (Lys-Gly) (interchain with G-Cter in SUMO1); alternate linkage. Serine 661 carries the post-translational modification Phosphoserine. Residue lysine 676 forms a Glycyl lysine isopeptide (Lys-Gly) (interchain with G-Cter in SUMO2) linkage.

In terms of assembly, identified in the spliceosome C complex. Interacts with PPIA/CYPA. Sumoylated. As to expression, expressed in all tissues tested, including liver, heart, lung, skeletal muscle, kidney, stomach, large intestine, small intestine, pancreas, spleen, peritoneal macrophage and thyroid.

It localises to the nucleus matrix. Its function is as follows. Pre-mRNA binding protein, binds avidly to poly(G) and poly(U) RNA homopolymers. Involved in splicing. Acts as a receptor for carcinoembryonic antigen in Kupffer cells, may initiate a series of signaling events leading to tyrosine phosphorylation of proteins and induction of IL-1 alpha, IL-6, IL-10 and tumor necrosis factor alpha cytokines. The polypeptide is Heterogeneous nuclear ribonucleoprotein M (Hnrnpm) (Rattus norvegicus (Rat)).